The chain runs to 504 residues: ATP synthase subunit alpha (504 aa).

169 to 176 lines the ATP pocket; that stretch reads GDRQIGKT.

This sequence belongs to the ATPase alpha/beta chains family. In terms of assembly, F-type ATPases have 2 components, CF(1) - the catalytic core - and CF(0) - the membrane proton channel. CF(1) has five subunits: alpha(3), beta(3), gamma(1), delta(1), epsilon(1). CF(0) has three main subunits: a(1), b(2) and c(9-12). The alpha and beta chains form an alternating ring which encloses part of the gamma chain. CF(1) is attached to CF(0) by a central stalk formed by the gamma and epsilon chains, while a peripheral stalk is formed by the delta and b chains.

It localises to the cell membrane. The enzyme catalyses ATP + H2O + 4 H(+)(in) = ADP + phosphate + 5 H(+)(out). Produces ATP from ADP in the presence of a proton gradient across the membrane. The alpha chain is a regulatory subunit. The protein is ATP synthase subunit alpha of Syntrophomonas wolfei subsp. wolfei (strain DSM 2245B / Goettingen).